Here is a 204-residue protein sequence, read N- to C-terminus: MSNNKTKYLVITTFFMAIILLQVLIPWLGYIPLGAVIVGAQPTIIQFTVAIAAILLGARRGAFIGGFWGLLTLWQAWSTPGSIGSLMFQNPFTAFIPRILVGLIIGMAFNKWLRNKNFGFRTLGLGFLGGLAALINTVGVVLLTVIGFTVMRTNFTGIPNHNLLGWLIGIVSFNSIFEIITGIILVAAIGNVLVPIAERAGIKG.

6 helical membrane-spanning segments follow: residues 18 to 38 (IILL…AVIV), 39 to 59 (GAQP…LGAR), 63 to 83 (FIGG…PGSI), 86 to 106 (LMFQ…LIIG), 123 to 143 (LGLG…VVLL), and 176 to 196 (IFEI…LVPI).

In terms of assembly, in E.coli forms a stable energy-coupling factor (ECF) transporter complex probably composed of a membrane-embedded substrate-binding protein (S component), two ATP-binding proteins (A components) and a transmembrane protein (T component).

Its subcellular location is the cell membrane. Its function is as follows. Probable pantothenate-binding protein that interacts with the energy-coupling factor (ECF) ABC-transporter complex. Unlike classic ABC transporters this ECF transporter provides the energy necessary to transport a number of different substrates. The substrates themselves are bound by transmembrane, not extracytoplasmic soluble proteins and transport it into cells. Upon coexpression with its energy-coupling factor (ECF) ABC-transporter complex EcfA1A2T in E.coli allows pantothenate uptake; uptake requires both PanT and EcfA1A2T. This chain is Pantothenate transporter PanT (panT), found in Leuconostoc mesenteroides subsp. mesenteroides (strain ATCC 8293 / DSM 20343 / BCRC 11652 / CCM 1803 / JCM 6124 / NCDO 523 / NBRC 100496 / NCIMB 8023 / NCTC 12954 / NRRL B-1118 / 37Y).